The chain runs to 516 residues: MVHARRHETRKNSKTQVPEQKSRVDWRRTKRSVSQLFDSDEELDSDEEIGSDEDLDGGESIDSDGKLDISKDSGINEIPEKETELNLIKVESERSNSKCHMNTSSSSADEEEMNKTKHNDLPDDEAHPGQAEGHHNKLTGQVLEEDVEDECIKPGKRKRLSSVMYDSDESDDSDILVRKASAKHPRRVVEDECSSLEMERETPEKSPAARKREYHQKLQELCERSRQKQRHNSGRNCESSEKDSCSSTDEDEDDDDYGDAENEDDYMIDDFVVGDEEADEENKNQGENLTTSQLKLVKQNSLYSFSDHYTHFERVVKALLINAFDGSFLETLYAGKRKKSYAQDMLTSLHYLDDRFIQPRLESLVSRSRWREQYKERVESYSDLSIHWKSPENCGCQACGLHRYCKFSVRLSGKLYNTRTMETDDFMSRDKQVFIVGRICAERTKIYHKLKHFKFKLYQDCCSIAYTKEVGDEQVKDTVKRLFCQLKKSGWIRKKHGQLEEYLNSADYFQDEKFKL.

The segment covering 1-13 has biased composition (basic residues); sequence MVHARRHETRKNS. A disordered region spans residues 1-265; it reads MVHARRHETR…DYGDAENEDD (265 aa). Over residues 38–62 the composition is skewed to acidic residues; it reads DSDEELDSDEEIGSDEDLDGGESID. The span at 78–96 shows a compositional bias: basic and acidic residues; it reads IPEKETELNLIKVESERSN. Residues 98 to 107 are compositionally biased toward polar residues; it reads KCHMNTSSSS. The span at 113–135 shows a compositional bias: basic and acidic residues; it reads MNKTKHNDLPDDEAHPGQAEGHH. 2 positions are modified to phosphoserine: Ser-170 and Ser-194. A Phosphothreonine modification is found at Thr-202. The stretch at 204–232 forms a coiled coil; that stretch reads EKSPAARKREYHQKLQELCERSRQKQRHN. Over residues 215–226 the composition is skewed to basic and acidic residues; that stretch reads HQKLQELCERSR. Residues 248–265 show a composition bias toward acidic residues; sequence TDEDEDDDDYGDAENEDD. At Ser-301 the chain carries Phosphoserine.

The protein is Coiled-coil domain-containing protein 82 (Ccdc82) of Rattus norvegicus (Rat).